A 374-amino-acid polypeptide reads, in one-letter code: N5-carboxyaminoimidazole ribonucleotide synthase (374 aa).

Residues R108, K148, 153–159 (GYDGKGQ), 183–186 (EQFL), E191, H214, and 266–267 (NE) each bind ATP. An ATP-grasp domain is found at 112–296 (KQTLQKAGSK…QFDTHILAVT (185 aa)).

Belongs to the PurK/PurT family. As to quaternary structure, homodimer.

It carries out the reaction 5-amino-1-(5-phospho-beta-D-ribosyl)imidazole + hydrogencarbonate + ATP = 5-carboxyamino-1-(5-phospho-D-ribosyl)imidazole + ADP + phosphate + 2 H(+). Its pathway is purine metabolism; IMP biosynthesis via de novo pathway; 5-amino-1-(5-phospho-D-ribosyl)imidazole-4-carboxylate from 5-amino-1-(5-phospho-D-ribosyl)imidazole (N5-CAIR route): step 1/2. Functionally, catalyzes the ATP-dependent conversion of 5-aminoimidazole ribonucleotide (AIR) and HCO(3)(-) to N5-carboxyaminoimidazole ribonucleotide (N5-CAIR). This is N5-carboxyaminoimidazole ribonucleotide synthase from Staphylococcus haemolyticus (strain JCSC1435).